Here is a 1342-residue protein sequence, read N- to C-terminus: DNA-directed RNA polymerase subunit beta (1342 aa).

Belongs to the RNA polymerase beta chain family. As to quaternary structure, the RNAP catalytic core consists of 2 alpha, 1 beta, 1 beta' and 1 omega subunit. When a sigma factor is associated with the core the holoenzyme is formed, which can initiate transcription.

The catalysed reaction is RNA(n) + a ribonucleoside 5'-triphosphate = RNA(n+1) + diphosphate. Its function is as follows. DNA-dependent RNA polymerase catalyzes the transcription of DNA into RNA using the four ribonucleoside triphosphates as substrates. The polypeptide is DNA-directed RNA polymerase subunit beta (Mannheimia succiniciproducens (strain KCTC 0769BP / MBEL55E)).